We begin with the raw amino-acid sequence, 311 residues long: Homoserine kinase (311 aa).

Pro88–Ala98 provides a ligand contact to ATP.

The protein belongs to the GHMP kinase family. Homoserine kinase subfamily.

Its subcellular location is the cytoplasm. It catalyses the reaction L-homoserine + ATP = O-phospho-L-homoserine + ADP + H(+). It participates in amino-acid biosynthesis; L-threonine biosynthesis; L-threonine from L-aspartate: step 4/5. In terms of biological role, catalyzes the ATP-dependent phosphorylation of L-homoserine to L-homoserine phosphate. This Saccharolobus islandicus (strain Y.N.15.51 / Yellowstone #2) (Sulfolobus islandicus) protein is Homoserine kinase.